The primary structure comprises 3856 residues: Hybrid PKS-NRPS synthetase traA (3856 aa).

One can recognise a Ketosynthase family 3 (KS3) domain in the interval 6-438; the sequence is PEPIAIVGSG…GTNGHAILEE (433 aa). Active-site for beta-ketoacyl synthase activity residues include Cys179, His318, and His358. A malonyl-CoA:ACP transacylase (MAT) domain region spans residues 554–885; the sequence is IFTGQGAQWA…FSDALGFVWT (332 aa). The interval 943–1081 is N-terminal hotdog fold; it reads HELLGVPSPN…GKVTVIYGTP (139 aa). The tract at residues 943-1247 is dehydratase (DH) domain; the sequence is HELLGVPSPN…LSMKPFSPAT (305 aa). The PKS/mFAS DH domain maps to 943–1249; the sequence is HELLGVPSPN…MKPFSPATAD (307 aa). The active-site Proton acceptor; for dehydratase activity is the His975. The interval 1096-1249 is C-terminal hotdog fold; the sequence is MVDIQAEQFY…MKPFSPATAD (154 aa). Asp1156 acts as the Proton donor; for dehydratase activity in catalysis. The methyltransferase (MT) domain stretch occupies residues 1290–1456; the sequence is LACVAQQIVH…RKAGFSGIDS (167 aa). Residues 1984 to 2158 form a ketoreductase (KR) domain region; it reads TYVLVGLSGR…ATSLDIGSIV (175 aa). The region spanning 2266–2347 is the Carrier 1 domain; the sequence is ADALEILKEL…TLCQQALEKL (82 aa). Position 2307 is an O-(pantetheine 4'-phosphoryl)serine (Ser2307). A disordered region spans residues 2351–2422; sequence ILPNVESGGP…SSTPATVLSN (72 aa). 2 stretches are compositionally biased toward low complexity: residues 2357-2369 and 2399-2418; these read SGGP…SKPT and TTSP…TPAT. Residues 2446-2884 form a condensation (C) domain region; the sequence is VKTELVSFQQ…FALFSDKELK (439 aa). Residues 2910-3310 are adenylation (A) domain; that stretch reads QIAKENDDKV…GAMVFHNRIA (401 aa). The disordered stretch occupies residues 3403–3429; that stretch reads SKTDRKALKELPLPQRSNHDTGDNTES. The region spanning 3428-3507 is the Carrier 2 domain; sequence ESLTETMLEL…DMTQKIEESL (80 aa). Ser3467 bears the O-(pantetheine 4'-phosphoryl)serine mark. A reductase (R) domain region spans residues 3544–3768; the sequence is VTGSGGFLGK…EMTPIHSAAS (225 aa).

This sequence in the C-terminal section; belongs to the NRP synthetase family.

It functions in the pathway secondary metabolite biosynthesis. In terms of biological role, hybrid PKS-NRPS synthetase; part of the tra gene cluster that produces terrestric acid. The clavatol biosynthesis cluster cla and the terrestric acid cluster tra are both involved in the production of peniphenones and penilactones. The non-reducing PKS claF is responsible for the formation of clavatol from successive condensations of 3 malonyl-CoA units, presumably with a simple acetyl-CoA starter unit, and 2 methylation steps. The esterase claE probably collaborates with claF by catalyzing the hydrolysis of ACP-bound acyl intermediates to free the ACP from stalled intermediates. The clavatol oxidase claD then converts clavatol to hydroxyclavatol. Spontaneous dehydration of hydroxyclavatol leads to the accumulation of the highly active ortho-quinone methide. On the other hand, the PKS-NRPS hybrid traA is involved in the formation of crustosic acid, with the help of traB and traD. The polyketide synthase module (PKS) of traA is responsible for the synthesis of the polyketide backbone via the condensation of an acetyl-CoA starter unit with 3 malonyl-CoA units. The downstream nonribosomal peptide synthetase (NRPS) module then amidates the carboxyl end of the polyketide with L-malic acid. Because traA lacks a designated enoylreductase (ER) domain, the required activity is provided the enoyl reductase traG. Crustosic acid undergoes decarboxylation and isomerization to the terrestric acid, catalyzed by the 2-oxoglutarate-dependent dioxygenase traH. Both acids are further converted to the 2 gamma-butyrolactones (R)-5-methyltetronic acid and (S)-5-carboxylmethyltetronic acid, with involvement of the cytochrome P450 monooxygenase claJ. Spontaneous addition of the methide to these gamma-butyrolactones leads to peniphenone D and penilactone D, which undergo again stereospecific attacking by methide to give penilactones A and B. This chain is Hybrid PKS-NRPS synthetase traA, found in Penicillium crustosum (Blue mold fungus).